A 490-amino-acid chain; its full sequence is UDP-glycosyltransferase 86A1 (490 aa).

UDP-alpha-D-glucose is bound by residues S294, 352–354, 369–377, and 391–394; these read CCQ, HCGWNSILE, and LTDQ.

The protein belongs to the UDP-glycosyltransferase family.

The protein is UDP-glycosyltransferase 86A1 (UGT86A1) of Arabidopsis thaliana (Mouse-ear cress).